Here is a 1238-residue protein sequence, read N- to C-terminus: Kinesin-related protein 10 (1238 aa).

Residues 16 to 374 (SMIVTVRIRP…LKYAQRAKSI (359 aa)) form the Kinesin motor domain. Residue 116 to 123 (GASGAGKT) coordinates ATP. Residues 417 to 436 (NNNNSNNNNNNNNNNYFSNS) are compositionally biased toward low complexity. The segment at 417-503 (NNNNSNNNNN…DGEDSNNRDN (87 aa)) is disordered. A compositionally biased stretch (polar residues) spans 437-464 (FGSCGNKNQPIKQPTPPTSLFHQQNQKY). Acidic residues predominate over residues 468–497 (DDDDDDDNDQEENNDEVLINEDDEEVDGED). The stretch at 527–602 (TLKKTQSIQR…NNQWRRKLQS (76 aa)) forms a coiled coil. 3 stretches are compositionally biased toward low complexity: residues 726 to 795 (NDIN…NIIN), 918 to 934 (LLPSTTTATTTTLSSPL), and 961 to 971 (NNNNNNNNIAP). 4 disordered regions span residues 726-802 (NDIN…LKPR), 891-971 (EIDD…NIAP), 1134-1156 (TPTSTISSSISTRPITTSTTTST), and 1191-1238 (ATLT…KIIK). Residues 1191–1203 (ATLTPNRNNSQIV) are compositionally biased toward polar residues. Positions 1215–1228 (PTSSSSRLLPSSRT) are enriched in low complexity. Residues 1229 to 1238 (TVNTSRKIIK) are compositionally biased toward polar residues.

It belongs to the TRAFAC class myosin-kinesin ATPase superfamily. Kinesin family.

Its subcellular location is the cytoplasm. The protein localises to the cytoskeleton. In terms of biological role, microtubule-associated force-producing protein that plays a role in organelle transport. Its motor activity is directed toward the microtubule's plus end. Cooperates with kif8 and dynein to organize interphase microtubules. The protein is Kinesin-related protein 10 (kif10) of Dictyostelium discoideum (Social amoeba).